Here is a 243-residue protein sequence, read N- to C-terminus: Ribosomal RNA small subunit methyltransferase G (243 aa).

S-adenosyl-L-methionine contacts are provided by residues Gly-79, Phe-84, 130 to 131 (AE), and Arg-150. The interval 219–243 (EKKKQTPNKYPRKPGTPGKDPIGKK) is disordered.

Belongs to the methyltransferase superfamily. RNA methyltransferase RsmG family.

It is found in the cytoplasm. Its function is as follows. Specifically methylates the N7 position of a guanine in 16S rRNA. This chain is Ribosomal RNA small subunit methyltransferase G, found in Pediococcus pentosaceus (strain ATCC 25745 / CCUG 21536 / LMG 10740 / 183-1w).